The chain runs to 228 residues: Cytidylate kinase (228 aa).

17 to 25 (GPTASGKGT) provides a ligand contact to ATP.

It belongs to the cytidylate kinase family. Type 1 subfamily.

It localises to the cytoplasm. The catalysed reaction is CMP + ATP = CDP + ADP. It carries out the reaction dCMP + ATP = dCDP + ADP. This is Cytidylate kinase from Burkholderia cenocepacia (strain HI2424).